We begin with the raw amino-acid sequence, 234 residues long: Carboxy-S-adenosyl-L-methionine synthase (234 aa).

Residues Tyr-35, 60 to 62, 83 to 84, Asn-124, and Arg-191 each bind S-adenosyl-L-methionine; these read GSS and DN.

It belongs to the class I-like SAM-binding methyltransferase superfamily. Cx-SAM synthase family. Homodimer.

It catalyses the reaction prephenate + S-adenosyl-L-methionine = carboxy-S-adenosyl-L-methionine + 3-phenylpyruvate + H2O. Its function is as follows. Catalyzes the conversion of S-adenosyl-L-methionine (SAM) to carboxy-S-adenosyl-L-methionine (Cx-SAM). The chain is Carboxy-S-adenosyl-L-methionine synthase from Nautilia profundicola (strain ATCC BAA-1463 / DSM 18972 / AmH).